The primary structure comprises 330 residues: Putative zinc finger protein CONSTANS-LIKE 11 (330 aa).

4 residues coordinate Zn(2+): Cys5, Cys8, Cys28, and His33. The B box-type 1; atypical zinc finger occupies 5–47 (CDFCGTEKALIYCKSDSAKLCLNCDVNVHSANPLSQRHTRSLL). The B box-type 2; degenerate zinc-finger motif lies at 48-88 (CEKCSLQPTAVHCMNENVSLCQGCQWTASNCTGLGHRLQSL). One can recognise a CCT domain in the interval 276–318 (RDEAKKRYKQKKSKRMFGKQIRYASRKARADTRKRVKGRFVKS).

Belongs to the CONSTANS family.

The protein localises to the nucleus. In Arabidopsis thaliana (Mouse-ear cress), this protein is Putative zinc finger protein CONSTANS-LIKE 11 (COL11).